Reading from the N-terminus, the 289-residue chain is 33 kDa chaperonin (289 aa).

2 disulfide bridges follow: cysteine 235–cysteine 237 and cysteine 268–cysteine 271.

The protein belongs to the HSP33 family. Under oxidizing conditions two disulfide bonds are formed involving the reactive cysteines. Under reducing conditions zinc is bound to the reactive cysteines and the protein is inactive.

It is found in the cytoplasm. In terms of biological role, redox regulated molecular chaperone. Protects both thermally unfolding and oxidatively damaged proteins from irreversible aggregation. Plays an important role in the bacterial defense system toward oxidative stress. The chain is 33 kDa chaperonin from Bacillus licheniformis (strain ATCC 14580 / DSM 13 / JCM 2505 / CCUG 7422 / NBRC 12200 / NCIMB 9375 / NCTC 10341 / NRRL NRS-1264 / Gibson 46).